Reading from the N-terminus, the 285-residue chain is MSHAMDLLHVFILAVIQGLAELLPVSSSAHVILAEKLMGFDPSAPNMTFLLVMLHTGTMFAVIVYFWHSWKKTYFFDWQSFKQRAWYVLLATAITGVLGLLLQSLIKHVFFGGVSSFEIEHLFSNSKLMAAALAAAGILIILSSRLDRGQQGDIRLPSAMIIGAVQALCLPFRGFSRSGATISTGLFLGISRQKAEEFSFALAVVLTPAVIVKELVRLLHAQHATTGATHLALGSLLLPSIFGMVFSFLTGLLALKWLSAWLEHGRWYLFGIYCLAFSGVVLTLA.

Transmembrane regions (helical) follow at residues 5 to 25 (MDLLHVFILAVIQGLAELLPV), 47 to 67 (MTFLLVMLHTGTMFAVIVYFW), 86 to 106 (WYVLLATAITGVLGLLLQSLI), 122 to 142 (LFSNSKLMAAALAAAGILIIL), 156 to 176 (LPSAMIIGAVQALCLPFRGFS), 198 to 218 (FSFALAVVLTPAVIVKELVRL), 235 to 255 (SLLLPSIFGMVFSFLTGLLAL), and 265 to 285 (GRWYLFGIYCLAFSGVVLTLA).

Belongs to the UppP family.

Its subcellular location is the cell inner membrane. It catalyses the reaction di-trans,octa-cis-undecaprenyl diphosphate + H2O = di-trans,octa-cis-undecaprenyl phosphate + phosphate + H(+). In terms of biological role, catalyzes the dephosphorylation of undecaprenyl diphosphate (UPP). Confers resistance to bacitracin. The protein is Undecaprenyl-diphosphatase 2 of Acinetobacter baylyi (strain ATCC 33305 / BD413 / ADP1).